A 236-amino-acid polypeptide reads, in one-letter code: 2,3,4,5-tetrahydropyridine-2,6-dicarboxylate N-acetyltransferase (236 aa).

Belongs to the transferase hexapeptide repeat family. DapH subfamily.

It carries out the reaction (S)-2,3,4,5-tetrahydrodipicolinate + acetyl-CoA + H2O = L-2-acetamido-6-oxoheptanedioate + CoA. It participates in amino-acid biosynthesis; L-lysine biosynthesis via DAP pathway; LL-2,6-diaminopimelate from (S)-tetrahydrodipicolinate (acetylase route): step 1/3. Catalyzes the transfer of an acetyl group from acetyl-CoA to tetrahydrodipicolinate. The protein is 2,3,4,5-tetrahydropyridine-2,6-dicarboxylate N-acetyltransferase of Clostridium beijerinckii (strain ATCC 51743 / NCIMB 8052) (Clostridium acetobutylicum).